Consider the following 685-residue polypeptide: MHSEELLAQVAALPALPGVYRYFDSQGLLLYVGKARHLKRRVASYFTKNHGGTRIGHMVCKIARLETTVVRSEAEALLLENNLIKTQNPRFNILFRDDKSYPYLKITGAPASSAGRDAPGQRFPRIAYYRGAVDKQHRYFGPYPSAWAVKESIELLQKVFRLRTCEDTVFANRTRPCLLYQIKRCSGPCVNLIAPEAYAVDVQHAQALLSGQTQELLQAMEARMMAYSGQLAFEQAAEVRNQMQALSRVLHQQSIESAHDKDVDILAVRVQGGRACVNLAMVRGGRHLGDRPYFPTHLEDAALFEQETRDAEEAPATPPRPVEALVLEAFVAQHYMVVAPPPVLVTSTPLDKALLEALSGHLTAAQGGDHAPAAQGGDPPPAASSGGHPLRGTVHITAVHQPREQRRAWLEMAQKNADLQLARLLAQEGSQQARTRALAEALDLPLADLDPLTIECFDISHTAGEATQASCVVFHHHKMQSSEYRRYKIDGITGGDDYAAMRQVLTRRYGKLAEAAHEAGGVDCAARPAAPAQGQARLPDLVLIDGGKGQVGVAREVFTALGLDLTRIVGVEKGEGRKVGLEELVFADGREKASLGKDSAALMLVAQIRDEAHRFAITGMRAARARVRTGGGQLQEIAGVGPKKRARLLQRFGGVRGVASASVEDLITVDGISRALAEEIYRALR.

The 79-residue stretch at A15–I93 folds into the GIY-YIG domain. Residues Q214–V249 form the UVR domain. Residues A365–H388 show a composition bias toward low complexity. The interval A365–R391 is disordered.

This sequence belongs to the UvrC family. As to quaternary structure, interacts with UvrB in an incision complex.

The protein localises to the cytoplasm. The UvrABC repair system catalyzes the recognition and processing of DNA lesions. UvrC both incises the 5' and 3' sides of the lesion. The N-terminal half is responsible for the 3' incision and the C-terminal half is responsible for the 5' incision. The protein is UvrABC system protein C of Verminephrobacter eiseniae (strain EF01-2).